Here is a 164-residue protein sequence, read N- to C-terminus: MD-2-related lipid-recognition protein 3 (164 aa).

Residues 1–24 (MAMSHVQPMLLLLVSLFFLPALRG) form the signal peptide.

As to quaternary structure, interacts with RUB1/NEDD8. Neddylated. In terms of processing, ubiquitinated.

The protein resides in the vacuole. It localises to the endoplasmic reticulum. In terms of biological role, may be involved in herbivory-mediated responses. May play a role in herbivory-associated molecular pattern (HAMP) recognition. May function is jasmonate (JA) signaling in response to HAMP. May play a role in defense response against the pathogens Altenaria brassicicola and Pseudomonas syringae. The polypeptide is MD-2-related lipid-recognition protein 3 (Arabidopsis thaliana (Mouse-ear cress)).